The chain runs to 260 residues: MTILDEIVDYKRNLIKEGYYEEKLKTLNEVDITHKSSFKSQLDESNQLAVIAEIKSKSPTLDQLPNRDLAQQVKDYEANGANAVSILTDEHYFGGSYERLQDLTLQTTLPVLCKDFVVDKIQIDVAKKAGASIILLIVNVLTDQQMKDLYQYATSLNLEVLVEVHDKEELERAYKLKPQIIGVNNRDLKRFVTDVLHTNEILENKKEGYYYISESGIRDEQDVANVVESGIDGLLIGESLMKCEDLSQFLPGLKLTKVTK.

It belongs to the TrpC family.

It carries out the reaction 1-(2-carboxyphenylamino)-1-deoxy-D-ribulose 5-phosphate + H(+) = (1S,2R)-1-C-(indol-3-yl)glycerol 3-phosphate + CO2 + H2O. Its pathway is amino-acid biosynthesis; L-tryptophan biosynthesis; L-tryptophan from chorismate: step 4/5. The chain is Indole-3-glycerol phosphate synthase from Staphylococcus saprophyticus subsp. saprophyticus (strain ATCC 15305 / DSM 20229 / NCIMB 8711 / NCTC 7292 / S-41).